The sequence spans 279 residues: MSAEEPKSYPVPYRSVLQEKFEPGQTLIVKGSTIDESQRFTINLHSKTADFSGNDVPLHVSVRFDEGKIVLNSFSNGEWGKEERKSNPIKKGDSFDIRIRAHDDRFQIIVDHKEFKDYEHRLPLSSISHLSIDGDLYLNHVHWGGKYYPVPYESGLANGLPVGKSLLVFGTVEKKAKRFHVNLLRKNGDISFHFNPRFDEKHVIRNSLAANEWGNEEREGKNPFEKGVGFDLVIQNEEYAFQVFVNGERYISFAHRADPHDIAGLQISGDIELSGIQIQ.

2 consecutive Galectin domains span residues 13–144 and 152–279; these read YRSV…VHWG and YESG…IQIQ. 213–219 lines the a beta-D-galactoside pocket; that stretch reads WGNEERE.

The N-terminus is blocked.

Binds galactose. This Caenorhabditis elegans protein is 32 kDa beta-galactoside-binding lectin (lec-1).